A 276-amino-acid polypeptide reads, in one-letter code: NAD-capped RNA hydrolase NudC (276 aa).

Residue R82 coordinates substrate. Zn(2+) is bound by residues C112 and C115. E125 provides a ligand contact to substrate. 2 residues coordinate Zn(2+): C130 and C133. Residue Y138 participates in substrate binding. Positions P139–Y262 constitute a Nudix hydrolase domain. A172, E188, and E192 together coordinate a divalent metal cation. Residues G173–A194 carry the Nudix box motif. Residue Q206–S213 participates in substrate binding. Residue E233 coordinates a divalent metal cation. A255 serves as a coordination point for substrate.

Belongs to the Nudix hydrolase family. NudC subfamily. In terms of assembly, homodimer. It depends on Mg(2+) as a cofactor. Mn(2+) is required as a cofactor. Requires Zn(2+) as cofactor.

It catalyses the reaction a 5'-end NAD(+)-phospho-ribonucleoside in mRNA + H2O = a 5'-end phospho-adenosine-phospho-ribonucleoside in mRNA + beta-nicotinamide D-ribonucleotide + 2 H(+). The catalysed reaction is NAD(+) + H2O = beta-nicotinamide D-ribonucleotide + AMP + 2 H(+). The enzyme catalyses NADH + H2O = reduced beta-nicotinamide D-ribonucleotide + AMP + 2 H(+). In terms of biological role, mRNA decapping enzyme that specifically removes the nicotinamide adenine dinucleotide (NAD) cap from a subset of mRNAs by hydrolyzing the diphosphate linkage to produce nicotinamide mononucleotide (NMN) and 5' monophosphate mRNA. The NAD-cap is present at the 5'-end of some mRNAs and stabilizes RNA against 5'-processing. Has preference for mRNAs with a 5'-end purine. Catalyzes the hydrolysis of a broad range of dinucleotide pyrophosphates. The polypeptide is NAD-capped RNA hydrolase NudC (Pseudomonas putida (strain ATCC 700007 / DSM 6899 / JCM 31910 / BCRC 17059 / LMG 24140 / F1)).